A 95-amino-acid polypeptide reads, in one-letter code: Large ribosomal subunit protein uL23 (95 aa).

This sequence belongs to the universal ribosomal protein uL23 family. As to quaternary structure, part of the 50S ribosomal subunit. Contacts protein L29.

Functionally, binds to 23S rRNA. One of the proteins that surrounds the polypeptide exit tunnel on the outside of the ribosome. This Methanopyrus kandleri (strain AV19 / DSM 6324 / JCM 9639 / NBRC 100938) protein is Large ribosomal subunit protein uL23.